Here is a 212-residue protein sequence, read N- to C-terminus: Thymidylate kinase (212 aa).

10–17 contributes to the ATP binding site; sequence GPEGAGKT.

Belongs to the thymidylate kinase family.

The enzyme catalyses dTMP + ATP = dTDP + ADP. In terms of biological role, phosphorylation of dTMP to form dTDP in both de novo and salvage pathways of dTTP synthesis. This chain is Thymidylate kinase, found in Bacillus velezensis (strain DSM 23117 / BGSC 10A6 / LMG 26770 / FZB42) (Bacillus amyloliquefaciens subsp. plantarum).